We begin with the raw amino-acid sequence, 302 residues long: UDP-N-acetylenolpyruvoylglucosamine reductase (302 aa).

The 164-residue stretch at 32 to 195 (LGGPADLLAR…VTVTLELVPD (164 aa)) folds into the FAD-binding PCMH-type domain. Arg175 is an active-site residue. The active-site Proton donor is the Ser224. Glu294 is an active-site residue.

The protein belongs to the MurB family. FAD is required as a cofactor.

Its subcellular location is the cytoplasm. It carries out the reaction UDP-N-acetyl-alpha-D-muramate + NADP(+) = UDP-N-acetyl-3-O-(1-carboxyvinyl)-alpha-D-glucosamine + NADPH + H(+). Its pathway is cell wall biogenesis; peptidoglycan biosynthesis. Cell wall formation. In Moorella thermoacetica (strain ATCC 39073 / JCM 9320), this protein is UDP-N-acetylenolpyruvoylglucosamine reductase.